We begin with the raw amino-acid sequence, 452 residues long: Multifunctional glycoside hydrolase (452 aa).

Residues glutamine 17, histidine 118, and asparagine 162 each coordinate substrate. The Proton donor role is filled by glutamate 163. Tyrosine 303 contributes to the substrate binding site. The Nucleophile role is filled by glutamate 361. Substrate is bound by residues tryptophan 407 and 414–415 (EW).

The protein belongs to the glycosyl hydrolase 1 family. In terms of assembly, monomer. Homotrimer.

It catalyses the reaction Hydrolysis of terminal, non-reducing beta-D-glucosyl residues with release of beta-D-glucose.. It carries out the reaction Hydrolysis of terminal non-reducing beta-D-galactose residues in beta-D-galactosides.. The catalysed reaction is Hydrolysis of (1-&gt;4)-beta-D-xylans, to remove successive D-xylose residues from the non-reducing termini.. The enzyme catalyses Hydrolysis of (1-&gt;4)-linkages in (1-&gt;4)-beta-D-glucans, to remove successive glucose units.. It catalyses the reaction Hydrolysis of (1-&gt;4)-beta-D-glucosidic linkages in cellulose and cellotetraose, releasing cellobiose from the non-reducing ends of the chains.. The protein operates within glycan metabolism; beta-D-glucan degradation. It participates in glycan metabolism; cellulose degradation. Slight activation by Mn(2+), Ni(2+) and K(+). Slight inhibition by Fe(3+), Zn(2+), Co(2+), Mg(2+), Cu(2+), Na(+) and NH4(+). Has high beta-D-glucosidase, exoglucanase, beta-D-xylosidase, beta-D-galactosidase, and transgalactosylation activities in vitro. Has a very broad substrate specificity with the highest activity with p-nitrophenyl beta-D-galactopyranoside (pNPGal) as substrate. Active with pNP-beta-D-glucopyranoside (pNPGlu), pNP-beta-D-cellobioside (pNPC), lactose, pNP-beta-D-xylopyranoside (pNPX) and cellobiose in the order of decreasing activity, respectively. Very low activity with soluble polysaccharides synanthrin and locust bean gum. Very low, but detectable activity with insoluble substrates such as cotton and filter paper. No activity with pNP-alpha-L-arabinofuranoside (pNPAr) or carboxymethylcellulose (CMC) as substrates. Synthesizes galactooligosaccharides (GalOS) from lactose. Hydrolyzes pretreated corn stover releasing both glucose and xylose. This multifunctional enzyme may provide C.owensensis the benefit of utilizing a wide variety of available carbon sources in its natural growing environment as the ability to convert a wide range of soluble oligosaccharides to monoses is required in order to assimilate them. The protein is Multifunctional glycoside hydrolase of Caldicellulosiruptor owensensis (strain ATCC 700167 / DSM 13100 / OL).